The chain runs to 436 residues: WD repeat domain phosphoinositide-interacting protein 2 (436 aa).

The stretch at 182–222 is one WD 1 repeat; sequence AHDSPLAALAFDASGTKLATASEKGTVIRVFSIPEGQKLFE. The L/FRRG motif motif lies at 223-226; sequence FRRG. 2 WD repeats span residues 228–267 and 311–349; these read KRCVSICSLAFSMDGMFLSASSNTETVHIFKLETVKEKPQ and GHKNICALATIQKIPRLLVGAADGYLYMYNLDPQEGGEC.

It belongs to the WD repeat PROPPIN family.

Its subcellular location is the preautophagosomal structure membrane. In terms of biological role, component of the autophagy machinery that controls the major intracellular degradation process by which cytoplasmic materials are packaged into autophagosomes and delivered to lysosomes for degradation. Involved in an early step of the formation of preautophagosomal structures. The sequence is that of WD repeat domain phosphoinositide-interacting protein 2 (WIPI2) from Gallus gallus (Chicken).